Consider the following 116-residue polypeptide: Mercuric transport protein MerT (116 aa).

The next 2 membrane-spanning stretches (helical) occupy residues L16 to F36 and V46 to W66. The Hg(2+) site is built by C24 and C25. 2 residues coordinate Hg(2+): C76 and C82. A helical membrane pass occupies residues I94–F114.

The protein belongs to the MerT family.

The protein resides in the cell inner membrane. Its function is as follows. Involved in mercury resistance. Probably transfers a mercuric ion from the periplasmic Hg(2+)-binding protein MerP to the cytoplasmic mercuric reductase MerA. In Serratia marcescens, this protein is Mercuric transport protein MerT.